Here is an 877-residue protein sequence, read N- to C-terminus: Alpha-glucosidase (877 aa).

The signal sequence occupies residues 1 to 23; the sequence is MATVGVLLLCLCLCLFAPRLCSS. Residues 89–115 are disordered; sequence VPQDIIPRPAPGDVLHDAPPASSAPLQ. N-linked (GlcNAc...) asparagine glycans are attached at residues Asn191, Asn298, Asn338, and Asn391. Residues Asp437 and Glu440 contribute to the active site. Asn471 carries an N-linked (GlcNAc...) asparagine glycan. Asp534 acts as the Proton donor in catalysis. N-linked (GlcNAc...) asparagine glycosylation occurs at Asn570.

This sequence belongs to the glycosyl hydrolase 31 family. In terms of tissue distribution, high levels seen in the aleurone and scutellum after germination, while low levels are found in developing seeds.

It catalyses the reaction Hydrolysis of terminal, non-reducing (1-&gt;4)-linked alpha-D-glucose residues with release of alpha-D-glucose.. The protein is Alpha-glucosidase of Hordeum vulgare (Barley).